The sequence spans 174 residues: Crossover junction endodeoxyribonuclease RuvC (174 aa).

Active-site residues include aspartate 8, glutamate 69, and aspartate 141. Mg(2+) contacts are provided by aspartate 8, glutamate 69, and aspartate 141.

This sequence belongs to the RuvC family. In terms of assembly, homodimer which binds Holliday junction (HJ) DNA. The HJ becomes 2-fold symmetrical on binding to RuvC with unstacked arms; it has a different conformation from HJ DNA in complex with RuvA. In the full resolvosome a probable DNA-RuvA(4)-RuvB(12)-RuvC(2) complex forms which resolves the HJ. Mg(2+) serves as cofactor.

The protein localises to the cytoplasm. The catalysed reaction is Endonucleolytic cleavage at a junction such as a reciprocal single-stranded crossover between two homologous DNA duplexes (Holliday junction).. In terms of biological role, the RuvA-RuvB-RuvC complex processes Holliday junction (HJ) DNA during genetic recombination and DNA repair. Endonuclease that resolves HJ intermediates. Cleaves cruciform DNA by making single-stranded nicks across the HJ at symmetrical positions within the homologous arms, yielding a 5'-phosphate and a 3'-hydroxyl group; requires a central core of homology in the junction. The consensus cleavage sequence is 5'-(A/T)TT(C/G)-3'. Cleavage occurs on the 3'-side of the TT dinucleotide at the point of strand exchange. HJ branch migration catalyzed by RuvA-RuvB allows RuvC to scan DNA until it finds its consensus sequence, where it cleaves and resolves the cruciform DNA. This Xanthomonas axonopodis pv. citri (strain 306) protein is Crossover junction endodeoxyribonuclease RuvC.